The following is a 209-amino-acid chain: Ribosomal RNA large subunit methyltransferase E (209 aa).

The S-adenosyl-L-methionine site is built by glycine 63, tryptophan 65, aspartate 83, aspartate 99, and aspartate 124. The Proton acceptor role is filled by lysine 164.

This sequence belongs to the class I-like SAM-binding methyltransferase superfamily. RNA methyltransferase RlmE family.

Its subcellular location is the cytoplasm. The catalysed reaction is uridine(2552) in 23S rRNA + S-adenosyl-L-methionine = 2'-O-methyluridine(2552) in 23S rRNA + S-adenosyl-L-homocysteine + H(+). Functionally, specifically methylates the uridine in position 2552 of 23S rRNA at the 2'-O position of the ribose in the fully assembled 50S ribosomal subunit. In Yersinia enterocolitica serotype O:8 / biotype 1B (strain NCTC 13174 / 8081), this protein is Ribosomal RNA large subunit methyltransferase E.